A 449-amino-acid polypeptide reads, in one-letter code: Cysteine--tRNA ligase (449 aa).

Cys-30 is a binding site for Zn(2+). Positions 32–42 (PTVYDRAHLGN) match the 'HIGH' region motif. Positions 210, 235, and 239 each coordinate Zn(2+). The 'KMSKS' region signature appears at 268-272 (KMSKS). Lys-271 is a binding site for ATP.

It belongs to the class-I aminoacyl-tRNA synthetase family. Monomer. Requires Zn(2+) as cofactor.

It is found in the cytoplasm. The enzyme catalyses tRNA(Cys) + L-cysteine + ATP = L-cysteinyl-tRNA(Cys) + AMP + diphosphate. The protein is Cysteine--tRNA ligase of Acidiphilium cryptum (strain JF-5).